The following is a 67-amino-acid chain: Probable Sec-independent protein translocase protein TatE (67 aa).

The chain crosses the membrane as a helical span at residues 4 to 21 (ISITKLLVVAALVVLLFG).

Belongs to the TatA/E family. TatE subfamily.

Its subcellular location is the cell inner membrane. Its function is as follows. Part of the twin-arginine translocation (Tat) system that transports large folded proteins containing a characteristic twin-arginine motif in their signal peptide across membranes. TatE shares overlapping functions with TatA. This Salmonella dublin (strain CT_02021853) protein is Probable Sec-independent protein translocase protein TatE.